The primary structure comprises 384 residues: 23S rRNA (uracil(747)-C(5))-methyltransferase RlmC (384 aa).

Positions 7, 15, 18, and 94 each coordinate [4Fe-4S] cluster. Residues Gln219, Phe248, Glu269, and Asn316 each contribute to the S-adenosyl-L-methionine site. The Nucleophile role is filled by Cys343.

It belongs to the class I-like SAM-binding methyltransferase superfamily. RNA M5U methyltransferase family. RlmC subfamily.

It carries out the reaction uridine(747) in 23S rRNA + S-adenosyl-L-methionine = 5-methyluridine(747) in 23S rRNA + S-adenosyl-L-homocysteine + H(+). Its function is as follows. Catalyzes the formation of 5-methyl-uridine at position 747 (m5U747) in 23S rRNA. In Shewanella sp. (strain MR-7), this protein is 23S rRNA (uracil(747)-C(5))-methyltransferase RlmC.